A 386-amino-acid chain; its full sequence is Hydrazine synthase subunit beta (386 aa).

The signal sequence occupies residues 1–34 (MVIRRKMNKMIRKGMIGAVMLGAAVAISGGVATA).

As to quaternary structure, part of the hydrazine synthase complex that forms an elongated dimer of heterotrimers composed of one alpha, one beta and one gamma subunit.

It localises to the anammoxosome. Its pathway is nitrogen metabolism. Component of the hydrazine synthase complex that catalyzes the condensation of nitric oxide (NO) with ammonium to form hydrazine. The beta subunit may play a role in modulating transport of the hydroxylamine intermediate through a tunnel between the gamma and alpha subunit's active site. Is involved in anaerobic ammonium oxidation (anammox), a biological process in which nitrite is used as the electron acceptor in the conversion of ammonium to dinitrogen gas (N2) and water; this bacterial process has a major role in the Earth's nitrogen cycle and has been estimated to synthesize up to 50% of the dinitrogen gas emitted into our atmosphere from the oceans. This is Hydrazine synthase subunit beta from Kuenenia stuttgartiensis.